Reading from the N-terminus, the 423-residue chain is Tegument protein UL43 (423 aa).

Residues 1-12 are compositionally biased toward polar residues; the sequence is MEKTPAETTAVS. The disordered stretch occupies residues 1 to 46; sequence MEKTPAETTAVSAGNVPRDSIPCITNVSADTRGRTRPSRPATVPQR.

This sequence belongs to the herpesviridae US22 family.

It is found in the virion tegument. This chain is Tegument protein UL43 (UL43), found in Homo sapiens (Human).